Reading from the N-terminus, the 190-residue chain is Large ribosomal subunit protein uL6 (190 aa).

Belongs to the universal ribosomal protein uL6 family.

The polypeptide is Large ribosomal subunit protein uL6 (RpL9) (Spodoptera frugiperda (Fall armyworm)).